Consider the following 100-residue polypeptide: UPF0213 protein YhbQ (100 aa).

One can recognise a GIY-YIG domain in the interval 2 to 77; sequence TPWFLYLIRT…KQLTKRQKER (76 aa).

Belongs to the UPF0213 family.

This is UPF0213 protein YhbQ from Escherichia coli O7:K1 (strain IAI39 / ExPEC).